The sequence spans 162 residues: UPF0102 protein Bpet0439 (162 aa).

The disordered stretch occupies residues 15 to 52 (QAQQRQMKRRRAAAHRAARGPAPARAPRASPTQRTGTA). A compositionally biased stretch (basic residues) spans 20 to 32 (QMKRRRAAAHRAA). Residues 33–48 (RGPAPARAPRASPTQR) show a composition bias toward low complexity.

It belongs to the UPF0102 family.

This Bordetella petrii (strain ATCC BAA-461 / DSM 12804 / CCUG 43448) protein is UPF0102 protein Bpet0439.